The primary structure comprises 211 residues: Major fimbrial subunit (211 aa).

Positions 1-20 (MKKTLLGSLILLAFAGNVQA) are cleaved as a signal peptide. C43 and C83 are disulfide-bonded.

Belongs to the fimbrial protein family.

It localises to the fimbrium. In terms of biological role, mediates adherence to oropharyngeal epithelial cells. Helps the airway colonization process. The chain is Major fimbrial subunit (hifA) from Haemophilus influenzae.